Here is a 616-residue protein sequence, read N- to C-terminus: Electron transfer flavoprotein-ubiquinone oxidoreductase, mitochondrial (616 aa).

Residues 1 to 32 (MLVRLTKLSCPAYHWFHALKIKKCLPLCAPRC) constitute a mitochondrion transit peptide. 70-84 (VVIVGAGPAGLSAAI) is a binding site for FAD. An N6-acetyllysine modification is found at Lys95. The stretch at 108–129 (IGAHTLSGACLDPAAFKELFPD) is an intramembrane region. An N6-acetyllysine mark is found at Lys131 and Lys222. A ubiquinone contacts are provided by Gly304 and Gly305. Residues Lys356 and Lys415 each carry the N6-acetyllysine modification. The stretch at 427 to 446 (TGLHVTEYEDNLKQSWVWKE) is an intramembrane region. Phosphoserine is present on Ser550. The [4Fe-4S] cluster site is built by Cys560, Cys585, Cys588, and Cys591. In terms of domain architecture, 4Fe-4S ferredoxin-type spans 576 to 605 (FRLQINAQNCVHCKTCDIKDPSQNINWVVP).

The protein belongs to the ETF-QO/FixC family. In terms of assembly, monomer. Requires [4Fe-4S] cluster as cofactor. FAD is required as a cofactor. In terms of processing, acetylation of Lys-95 and Lys-222 is observed in liver mitochondria from fasted mice but not from fed mice.

Its subcellular location is the mitochondrion inner membrane. The catalysed reaction is a ubiquinone + reduced [electron-transfer flavoprotein] = a ubiquinol + oxidized [electron-transfer flavoprotein] + H(+). Accepts electrons from ETF and reduces ubiquinone. This is Electron transfer flavoprotein-ubiquinone oxidoreductase, mitochondrial (Etfdh) from Mus musculus (Mouse).